A 725-amino-acid polypeptide reads, in one-letter code: Ribosomal RNA large subunit methyltransferase K/L (725 aa).

Positions 45–156 (SGYRACLWSR…RGRLSLGIDL (112 aa)) constitute a THUMP domain.

This sequence belongs to the methyltransferase superfamily. RlmKL family.

It is found in the cytoplasm. It carries out the reaction guanosine(2445) in 23S rRNA + S-adenosyl-L-methionine = N(2)-methylguanosine(2445) in 23S rRNA + S-adenosyl-L-homocysteine + H(+). The catalysed reaction is guanosine(2069) in 23S rRNA + S-adenosyl-L-methionine = N(2)-methylguanosine(2069) in 23S rRNA + S-adenosyl-L-homocysteine + H(+). In terms of biological role, specifically methylates the guanine in position 2445 (m2G2445) and the guanine in position 2069 (m7G2069) of 23S rRNA. This is Ribosomal RNA large subunit methyltransferase K/L from Marinobacter nauticus (strain ATCC 700491 / DSM 11845 / VT8) (Marinobacter aquaeolei).